The following is a 507-amino-acid chain: ATP synthase subunit alpha, plastid (507 aa).

ATP is bound at residue 170–177; it reads GDRQTGKT.

This sequence belongs to the ATPase alpha/beta chains family. F-type ATPases have 2 components, CF(1) - the catalytic core - and CF(0) - the membrane proton channel. CF(1) has five subunits: alpha(3), beta(3), gamma(1), delta(1), epsilon(1). CF(0) has four main subunits: a, b, b' and c.

It localises to the plastid membrane. The catalysed reaction is ATP + H2O + 4 H(+)(in) = ADP + phosphate + 5 H(+)(out). Functionally, produces ATP from ADP in the presence of a proton gradient across the membrane. The alpha chain is a regulatory subunit. The sequence is that of ATP synthase subunit alpha, plastid from Aneura mirabilis (Parasitic liverwort).